A 115-amino-acid polypeptide reads, in one-letter code: NADH-ubiquinone oxidoreductase chain 3 (115 aa).

The next 3 membrane-spanning stretches (helical) occupy residues 3–23 (LMLA…IAFW), 55–75 (FFLV…LLPL), and 84–104 (LNTM…SLAY).

Belongs to the complex I subunit 3 family. As to quaternary structure, core subunit of respiratory chain NADH dehydrogenase (Complex I) which is composed of 45 different subunits. Interacts with TMEM186. Interacts with TMEM242.

Its subcellular location is the mitochondrion inner membrane. The enzyme catalyses a ubiquinone + NADH + 5 H(+)(in) = a ubiquinol + NAD(+) + 4 H(+)(out). Its function is as follows. Core subunit of the mitochondrial membrane respiratory chain NADH dehydrogenase (Complex I) which catalyzes electron transfer from NADH through the respiratory chain, using ubiquinone as an electron acceptor. Essential for the catalytic activity of complex I. The protein is NADH-ubiquinone oxidoreductase chain 3 of Bos indicus (Zebu).